We begin with the raw amino-acid sequence, 501 residues long: Glutathione gamma-glutamylcysteinyltransferase 1 (501 aa).

In terms of domain architecture, Peptidase C83 spans 1–221 (MAMAGLYRRL…GFMLISRPHR (221 aa)). Residues Cys-56, His-162, and Asp-180 contribute to the active site.

Belongs to the phytochelatin synthase family. In terms of tissue distribution, expressed in roots, nodules and leaves.

It catalyses the reaction [Glu(-Cys)](n)-Gly + glutathione + H(+) = [Glu(-Cys)](n+1)-Gly + glycine. Its activity is regulated as follows. Requires cadmium for activity. Also activated in vitro by Zn(2+), Cu(2+), Fe(2+) or Fe(3+) ions, but not by Co(2+) or Ni(2+) ions. In terms of biological role, involved in the synthesis of phytochelatins (PC) and homophytochelatins (hPC), the heavy-metal-binding peptides of plants. This Lotus japonicus (Lotus corniculatus var. japonicus) protein is Glutathione gamma-glutamylcysteinyltransferase 1 (PCS1).